The primary structure comprises 303 residues: B1 kinase (303 aa).

The protein belongs to the protein kinase superfamily. Ser/Thr protein kinase family. Poxviruses subfamily. As to quaternary structure, interacts with host JIP1; this interaction increases the amount of MAPK bound to JIP1 and subsequently increases the activity of transcription factors, such as JUN, that respond to these complexes. Interacts with protein OPG198; this interaction inhibits the repressive activity of OPG198 pseudokinase on viral replication factory formation. It depends on Mg(2+) as a cofactor. Autophosphorylated.

Its subcellular location is the virion. The protein resides in the host cytoplasm. The enzyme catalyses L-seryl-[protein] + ATP = O-phospho-L-seryl-[protein] + ADP + H(+). It catalyses the reaction L-threonyl-[protein] + ATP = O-phospho-L-threonyl-[protein] + ADP + H(+). Essential serine/threonine-protein kinase that plays different role in the viral life cycle. Phosphorylates the host small ribosomal protein RACK1 thereby customizing the ribosomes to a state optimal for viral mRNAs (which contain poly-A leaders) but not for host mRNAs. Facilitates viral DNA replication by inhibiting host BANF1, a cellular host defense responsive to foreign DNA. Phosphorylates host BANF1 on serine and threonine residues; this leads to BANF1 relocalization to the cytoplasm, loss of dimerization and impaired DNA binding activity. Indeed, BANF1 activity depends on its DNA-binding property which is blocked by VPK1-mediated phosphorylation. Required for viral intermediate genes expression, probably by inhibiting host BANF1. Modulates cellular responses via host JUN by two different mechanisms, either by direct phosphorylation or by modulation of upstream JIP1-MAPK complexes. Seems to participate in the accumulation/processing of late proteins and thus in virion maturation. In addition, inhibits B12 repressive activity on viral DNA replication via a phosphorylation-dependent mechanism. This Cynomys gunnisoni (Gunnison's prairie dog) protein is B1 kinase (OPG187).